A 929-amino-acid polypeptide reads, in one-letter code: Transcription initiation factor TFIID subunit 3 (929 aa).

Disordered regions lie at residues 131 to 152 (IVSS…TSAE) and 176 to 197 (LGKR…RPRL). Phosphoserine occurs at positions 183, 199, 229, and 243. 2 disordered regions span residues 221–358 (TQKI…ETIQ) and 405–578 (DPFE…PWKE). Low complexity predominate over residues 265-288 (TKSFTPKTKTKTSSPGQKTKSPKT). The residue at position 266 (K266) is an N6-acetyllysine. S291, S297, and S301 each carry phosphoserine. Polar residues-rich tracts occupy residues 340 to 358 (PNRT…ETIQ) and 434 to 466 (PKAS…SWTM). T501 is modified (phosphothreonine). Over residues 504–514 (PLHKVYEEKTK) the composition is skewed to basic and acidic residues. The segment covering 523-537 (KKLKKELKTKMKKKE) has biased composition (basic residues). A compositionally biased stretch (basic and acidic residues) spans 538 to 578 (KQRDREREKDKNKDKSKEKDKVKEKEKDKETGRETKYPWKE). K581 participates in a covalent cross-link: Glycyl lysine isopeptide (Lys-Gly) (interchain with G-Cter in SUMO2). 2 stretches are compositionally biased toward basic and acidic residues: residues 603–612 (KLKDGLVRKE) and 621–648 (KDRE…DKMK). Positions 603–658 (KLKDGLVRKEKEKHKDKKKDREKGKKDKDKREKEKVKDKGREDKMKAPAPPLVLPP) are disordered. At S667 the chain carries Phosphoserine. Over residues 692–701 (EKEKVKEKEK) the composition is skewed to basic and acidic residues. Residues 692–748 (EKEKVKEKEKKKDKKEKKKKKEKEKEKKEKEREKEKREREKREKEKEKHKHEKIKVE) form a disordered region. The span at 702-713 (KKDKKEKKKKKE) shows a compositional bias: basic residues. Positions 714–737 (KEKEKKEKEREKEKREREKREKEK) are enriched in basic and acidic residues. A Glycyl lysine isopeptide (Lys-Gly) (interchain with G-Cter in SUMO2) cross-link involves residue K746. Position 755 is a phosphoserine (S755). The residue at position 776 (K776) is an N6-acetyllysine. A compositionally biased stretch (low complexity) spans 778–787 (VPAPEAKPAP). The tract at residues 778-807 (VPAPEAKPAPSQNRPKTPPPAPAPAPGPML) is disordered. Over residues 793 to 804 (KTPPPAPAPAPG) the composition is skewed to pro residues. The segment at 865–915 (IWICPGCNKPDDGSPMIGCDDCDDWYHWPCVGIMTAPPEEMQWFCPKCANK) adopts a PHD-type zinc-finger fold. Zn(2+) contacts are provided by C868, C871, C883, C886, H891, C894, C909, and C912.

This sequence belongs to the TAF3 family. In terms of assembly, component of the TFIID basal transcription factor complex, composed of TATA-box-binding protein TBP, and a number of TBP-associated factors (TAFs), including TAF1, TAF2, TAF3, TAF4, TAF5, TAF6, TAF7, TAF8, TAF9, TAF10, TAF11, TAF12 and TAF13. Interacts with TAF10 via the histone fold. Interacts with TAF13, TBP, SAP130 and GCN5L2. Interacts with TBPL2.

It is found in the nucleus. Functionally, the TFIID basal transcription factor complex plays a major role in the initiation of RNA polymerase II (Pol II)-dependent transcription. TFIID recognizes and binds promoters with or without a TATA box via its subunit TBP, a TATA-box-binding protein, and promotes assembly of the pre-initiation complex (PIC). The TFIID complex consists of TBP and TBP-associated factors (TAFs), including TAF1, TAF2, TAF3, TAF4, TAF5, TAF6, TAF7, TAF8, TAF9, TAF10, TAF11, TAF12 and TAF13. The TFIID complex structure can be divided into 3 modules TFIID-A, TFIID-B, and TFIID-C. TAF3 forms the TFIID-A module together with TAF5 and TBP. Required in complex with TBPL2 for the differentiation of myoblasts into myocytes. The TAF3-TBPL2 complex replaces TFIID at specific promoters at an early stage in the differentiation process. This Homo sapiens (Human) protein is Transcription initiation factor TFIID subunit 3 (TAF3).